Here is a 543-residue protein sequence, read N- to C-terminus: Chaperonin GroEL (543 aa).

Residues 29–32, 86–90, G413, 478–480, and D494 each bind ATP; these read TLGP, DGTTT, and DAL. The disordered stretch occupies residues 524-543; it reads PEPEAPAVPAGMPGGMGGMY.

This sequence belongs to the chaperonin (HSP60) family. In terms of assembly, forms a cylinder of 14 subunits composed of two heptameric rings stacked back-to-back. Interacts with the co-chaperonin GroES.

The protein localises to the cytoplasm. It carries out the reaction ATP + H2O + a folded polypeptide = ADP + phosphate + an unfolded polypeptide.. Functionally, together with its co-chaperonin GroES, plays an essential role in assisting protein folding. The GroEL-GroES system forms a nano-cage that allows encapsulation of the non-native substrate proteins and provides a physical environment optimized to promote and accelerate protein folding. The protein is Chaperonin GroEL of Ruminiclostridium cellulolyticum (strain ATCC 35319 / DSM 5812 / JCM 6584 / H10) (Clostridium cellulolyticum).